A 319-amino-acid polypeptide reads, in one-letter code: tRNA uridine(34) hydroxylase (319 aa).

One can recognise a Rhodanese domain in the interval 127-221 (KQEDTVIIDA…YGKDPEVQGE (95 aa)). Residue Cys181 is the Cysteine persulfide intermediate of the active site.

Belongs to the TrhO family.

The enzyme catalyses uridine(34) in tRNA + AH2 + O2 = 5-hydroxyuridine(34) in tRNA + A + H2O. Its function is as follows. Catalyzes oxygen-dependent 5-hydroxyuridine (ho5U) modification at position 34 in tRNAs. The protein is tRNA uridine(34) hydroxylase of Bacillus cereus (strain AH187).